The following is a 256-amino-acid chain: 5-oxoprolinase subunit A 1 (256 aa).

The protein belongs to the LamB/PxpA family. As to quaternary structure, forms a complex composed of PxpA, PxpB and PxpC.

The catalysed reaction is 5-oxo-L-proline + ATP + 2 H2O = L-glutamate + ADP + phosphate + H(+). Functionally, catalyzes the cleavage of 5-oxoproline to form L-glutamate coupled to the hydrolysis of ATP to ADP and inorganic phosphate. This chain is 5-oxoprolinase subunit A 1, found in Pseudomonas syringae pv. tomato (strain ATCC BAA-871 / DC3000).